We begin with the raw amino-acid sequence, 153 residues long: Large ribosomal subunit protein eL15 (153 aa).

Residue K32 forms a Glycyl lysine isopeptide (Lys-Gly) (interchain with G-Cter in SUMO2) linkage. Residues S46 and S49 each carry the phosphoserine modification. The disordered stretch occupies residues 114-135 (TSAGRKSRGLGKGHKFHHTIGG). A compositionally biased stretch (basic residues) spans 118–131 (RKSRGLGKGHKFHH).

It belongs to the eukaryotic ribosomal protein eL15 family. Component of the large ribosomal subunit. Interacts with IFIT1 (via TPR repeats 1-4).

Its subcellular location is the cytoplasm. Its function is as follows. Component of the large ribosomal subunit. The ribosome is a large ribonucleoprotein complex responsible for the synthesis of proteins in the cell. In Sus scrofa (Pig), this protein is Large ribosomal subunit protein eL15 (RPL15).